The primary structure comprises 217 residues: 3,4-dihydroxy-2-butanone 4-phosphate synthase (217 aa).

D-ribulose 5-phosphate contacts are provided by residues 37–38 (RE), D42, 150–154 (RGGHT), and E174. Position 38 (E38) interacts with Mg(2+). Residue H153 coordinates Mg(2+).

This sequence belongs to the DHBP synthase family. As to quaternary structure, homodimer. Requires Mg(2+) as cofactor. The cofactor is Mn(2+).

The enzyme catalyses D-ribulose 5-phosphate = (2S)-2-hydroxy-3-oxobutyl phosphate + formate + H(+). It functions in the pathway cofactor biosynthesis; riboflavin biosynthesis; 2-hydroxy-3-oxobutyl phosphate from D-ribulose 5-phosphate: step 1/1. Catalyzes the conversion of D-ribulose 5-phosphate to formate and 3,4-dihydroxy-2-butanone 4-phosphate. This chain is 3,4-dihydroxy-2-butanone 4-phosphate synthase, found in Escherichia coli O17:K52:H18 (strain UMN026 / ExPEC).